The following is a 432-amino-acid chain: Asparagine--tRNA ligase 2 (432 aa).

This sequence belongs to the class-II aminoacyl-tRNA synthetase family. Homodimer.

The protein localises to the cytoplasm. It carries out the reaction tRNA(Asn) + L-asparagine + ATP = L-asparaginyl-tRNA(Asn) + AMP + diphosphate + H(+). The protein is Asparagine--tRNA ligase 2 (asnS2) of Lactiplantibacillus plantarum (strain ATCC BAA-793 / NCIMB 8826 / WCFS1) (Lactobacillus plantarum).